The sequence spans 694 residues: Elongation factor G (694 aa).

Residues 8-284 (EKLRNIGIVA…AVIDFLPSPV (277 aa)) form the tr-type G domain. Residues 17 to 24 (AHIDAGKT), 81 to 85 (DTPGH), and 135 to 138 (NKMD) contribute to the GTP site.

This sequence belongs to the TRAFAC class translation factor GTPase superfamily. Classic translation factor GTPase family. EF-G/EF-2 subfamily.

The protein resides in the cytoplasm. Catalyzes the GTP-dependent ribosomal translocation step during translation elongation. During this step, the ribosome changes from the pre-translocational (PRE) to the post-translocational (POST) state as the newly formed A-site-bound peptidyl-tRNA and P-site-bound deacylated tRNA move to the P and E sites, respectively. Catalyzes the coordinated movement of the two tRNA molecules, the mRNA and conformational changes in the ribosome. This chain is Elongation factor G, found in Persephonella marina (strain DSM 14350 / EX-H1).